We begin with the raw amino-acid sequence, 1104 residues long: Mitogen-activated protein kinase kinase kinase 9 (1104 aa).

Residues 12–22 (ASAAAAAPPGE) are compositionally biased toward low complexity. A disordered region spans residues 12–47 (ASAAAAAPPGEDGAGAGAEEEEEEEEEAAAAVGPGE). Residues 29-39 (AEEEEEEEEEA) are compositionally biased toward acidic residues. Residues 52–116 (APLPYWTAVF…PSNYVTPRSA (65 aa)) form the SH3 domain. In terms of domain architecture, Protein kinase spans 144-412 (LTLEEIIGIG…LTTIEESGFF (269 aa)). ATP contacts are provided by residues 150 to 158 (IGIGGFGKV) and lysine 171. The active-site Proton acceptor is the aspartate 268. Threonine 304 and threonine 305 each carry phosphothreonine; by autocatalysis. Serine 308 is modified (phosphoserine; by autocatalysis). Phosphothreonine; by autocatalysis is present on threonine 312. Leucine-zipper regions lie at residues 430–451 (IQEM…EEEL) and 465–486 (LRRR…ELNI). Disordered regions lie at residues 532–636 (ASPT…PHFH), 675–742 (MEDE…LKRG), 781–819 (EEPE…FKKE), and 890–1038 (RDPN…CFAS). At serine 533 the chain carries Phosphoserine. 2 stretches are compositionally biased toward polar residues: residues 566 to 575 (PGESSKTWGR) and 723 to 739 (PVNS…TNSL). Positions 785-797 (PPAREEKKRREGL) are enriched in basic and acidic residues. Polar residues predominate over residues 893–910 (NQSLTPTHVTLTTPSQPS). A compositionally biased stretch (low complexity) spans 929 to 944 (SRSPSSNGLSPSPGAG). Positions 1014 to 1038 (HARSTSPANSSSTETPSNLDSCFAS) are enriched in polar residues.

It belongs to the protein kinase superfamily. STE Ser/Thr protein kinase family. MAP kinase kinase kinase subfamily. As to quaternary structure, homodimer. Mg(2+) serves as cofactor. Post-translationally, autophosphorylation on serine and threonine residues within the activation loop plays a role in enzyme activation. Thr-312 is likely to be the main autophosphorylation site. Autophosphorylation also occurs on Thr-304 and Ser-308. As to expression, expressed in epithelial tumor cell lines of colonic, breast and esophageal origin.

It catalyses the reaction L-seryl-[protein] + ATP = O-phospho-L-seryl-[protein] + ADP + H(+). It carries out the reaction L-threonyl-[protein] + ATP = O-phospho-L-threonyl-[protein] + ADP + H(+). With respect to regulation, homodimerization via the leucine zipper domains is required for autophosphorylation of multiple sites in the activation loop and subsequent activation. Autophosphorylation at Thr-312 is the key step in activation of MAP3K9/MLK1 and is required for full phosphorylation. Autophosphorylation at Thr-304 and Ser-308 have been shown to be of secondary importance in the activation of MAP3K9/MLK1. CEP-1347 and many indolocarbazole analogs have been shown to act as inhibitors of MAP3K9/MLK1 activity. Its function is as follows. Serine/threonine kinase which acts as an essential component of the MAP kinase signal transduction pathway. Plays an important role in the cascades of cellular responses evoked by changes in the environment. Once activated, acts as an upstream activator of the MKK/JNK signal transduction cascade through the phosphorylation of MAP2K4/MKK4 and MAP2K7/MKK7 which in turn activate the JNKs. The MKK/JNK signaling pathway regulates stress response via activator protein-1 (JUN) and GATA4 transcription factors. Also plays a role in mitochondrial death signaling pathway, including the release cytochrome c, leading to apoptosis. The sequence is that of Mitogen-activated protein kinase kinase kinase 9 (MAP3K9) from Homo sapiens (Human).